The following is a 395-amino-acid chain: MSDINVVLAELKRGVDEVLSEADLIEKLKENRPLKIKLGADPTAPDIHLGHTVVLNKLRQFQNFGHEVIFLIGDFTGMVGDPSGKNKTRPPLSREDVLRNAETYKQQIYKILDPQKTRIVFNSDWLGKLGTEGMIRLASNYTVARMLERDDFKKRFTEKQPIAIHEFIYPLLQGHDSVALEADVELGGTDQKFNLLVGRELQKSAGQKPQVAMTLPLLVGLDGEKKMSKSLGNYIGVTDAPNDMFGKIMSISDDLMWDWYDLLSFRPLTEIAQFKEEVKNGRNPRDVKILLAKEIIARFHSEADADTAEQEFINRFQKGAMPDEMPEFTFEGEIGLANLLKEAGLVASTSEANRMVQQDGVKIDGEKVEDAKTTISASTHVYQVGKRKFARVTVR.

The 'HIGH' region signature appears at 42 to 51 (PTAPDIHLGH). The 'KMSKS' region signature appears at 226 to 230 (KMSKS). Position 229 (lysine 229) interacts with ATP. The S4 RNA-binding domain maps to 334–394 (IGLANLLKEA…GKRKFARVTV (61 aa)).

The protein belongs to the class-I aminoacyl-tRNA synthetase family. TyrS type 2 subfamily. As to quaternary structure, homodimer.

The protein resides in the cytoplasm. It carries out the reaction tRNA(Tyr) + L-tyrosine + ATP = L-tyrosyl-tRNA(Tyr) + AMP + diphosphate + H(+). Catalyzes the attachment of tyrosine to tRNA(Tyr) in a two-step reaction: tyrosine is first activated by ATP to form Tyr-AMP and then transferred to the acceptor end of tRNA(Tyr). This chain is Tyrosine--tRNA ligase, found in Mannheimia succiniciproducens (strain KCTC 0769BP / MBEL55E).